The chain runs to 41 residues: uncharacterized protein (41 aa).

The helical transmembrane segment at 8-28 threads the bilayer; it reads IKKIAMFFLGILVGVFIVLFF.

The protein localises to the membrane. This is an uncharacterized protein from Streptococcus pneumoniae serotype 2 (strain D39 / NCTC 7466).